The chain runs to 674 residues: 1,4-alpha-glucan branching enzyme GlgB 1 (674 aa).

Asp-336 acts as the Nucleophile in catalysis. Glu-389 serves as the catalytic Proton donor.

The protein belongs to the glycosyl hydrolase 13 family. GlgB subfamily. Monomer.

The catalysed reaction is Transfers a segment of a (1-&gt;4)-alpha-D-glucan chain to a primary hydroxy group in a similar glucan chain.. It participates in glycan biosynthesis; glycogen biosynthesis. Functionally, catalyzes the formation of the alpha-1,6-glucosidic linkages in glycogen by scission of a 1,4-alpha-linked oligosaccharide from growing alpha-1,4-glucan chains and the subsequent attachment of the oligosaccharide to the alpha-1,6 position. This chain is 1,4-alpha-glucan branching enzyme GlgB 1, found in Clostridium perfringens (strain SM101 / Type A).